The sequence spans 223 residues: V-type ATP synthase subunit D (223 aa).

Residues 203-223 (AREAEEEGGRPNPQVEIGAGL) form a disordered region.

Belongs to the V-ATPase D subunit family.

In terms of biological role, produces ATP from ADP in the presence of a proton gradient across the membrane. This is V-type ATP synthase subunit D from Thermus thermophilus (strain ATCC BAA-163 / DSM 7039 / HB27).